Here is a 606-residue protein sequence, read N- to C-terminus: Transcription factor glial cells missing 2 (606 aa).

Positions 20–37 are enriched in polar residues; the sequence is DHSQLTQFVQPQSQSTHS. Disordered regions lie at residues 20–65, 475–501, and 561–606; these read DHSQ…KGKR, EMQQHHHQQQQSHQQFGGNQTAGHHYY, and TAPT…SVTH. The span at 44–61 shows a compositional bias: low complexity; that stretch reads PGQQQAGGSMTMPSSSTG. Residues 65-224 constitute a DNA-binding region (GCM); sequence REWDINDAIV…KNSSVSKRAF (160 aa). Polar residues predominate over residues 490 to 501; that stretch reads FGGNQTAGHHYY. The span at 569–580 shows a compositional bias: pro residues; that stretch reads PGHPPPPPPPPT. The segment covering 583-593 has biased composition (basic residues); it reads YHHHHHHHLHH. The span at 594–606 shows a compositional bias: low complexity; the sequence is PAAATGLAPSVTH.

Expressed in glial lineages within embryonic procephalic mesoderm. Expression is highest in hemocyte primordia and longitudinal and nerve root ganglia.

It localises to the nucleus. Functionally, transcription factor with a minor role promoting glial cell differentiation and a more significant role in hematocyte differentiation. Gcm2, together with gcm, is required for the proliferation of plasmatocyte precursors, the expression of Croquemort protein, and the ability of plasmatocytes to convert into macrophages. This chain is Transcription factor glial cells missing 2 (gcm2), found in Drosophila melanogaster (Fruit fly).